The chain runs to 61 residues: Photosystem II reaction center protein K (61 aa).

The propeptide occupies 1-24 (MLNIFSLICICINSALHSSSFFFA). Residues 40–60 (MPVIPVLFFLLALVWQAAVSF) traverse the membrane as a helical segment.

Belongs to the PsbK family. PSII is composed of 1 copy each of membrane proteins PsbA, PsbB, PsbC, PsbD, PsbE, PsbF, PsbH, PsbI, PsbJ, PsbK, PsbL, PsbM, PsbT, PsbX, PsbY, PsbZ, Psb30/Ycf12, at least 3 peripheral proteins of the oxygen-evolving complex and a large number of cofactors. It forms dimeric complexes.

It localises to the plastid. The protein resides in the chloroplast thylakoid membrane. Functionally, one of the components of the core complex of photosystem II (PSII). PSII is a light-driven water:plastoquinone oxidoreductase that uses light energy to abstract electrons from H(2)O, generating O(2) and a proton gradient subsequently used for ATP formation. It consists of a core antenna complex that captures photons, and an electron transfer chain that converts photonic excitation into a charge separation. This Liriodendron tulipifera (Tuliptree) protein is Photosystem II reaction center protein K.